Here is a 359-residue protein sequence, read N- to C-terminus: Alanine racemase, biosynthetic (359 aa).

Lysine 34 acts as the Proton acceptor; specific for D-alanine in catalysis. Residue lysine 34 is modified to N6-(pyridoxal phosphate)lysine. Arginine 129 serves as a coordination point for substrate. Catalysis depends on tyrosine 255, which acts as the Proton acceptor; specific for L-alanine. Residue methionine 303 participates in substrate binding.

The protein belongs to the alanine racemase family. As to quaternary structure, monomer but homodimer in the presence of the substrate. It depends on pyridoxal 5'-phosphate as a cofactor.

It carries out the reaction L-alanine = D-alanine. It functions in the pathway amino-acid biosynthesis; D-alanine biosynthesis; D-alanine from L-alanine: step 1/1. Its pathway is cell wall biogenesis; peptidoglycan biosynthesis. Functionally, catalyzes the interconversion of L-alanine and D-alanine. The chain is Alanine racemase, biosynthetic (alr) from Shigella dysenteriae.